Consider the following 141-residue polypeptide: Small ribosomal subunit protein uS8c (141 aa).

The protein belongs to the universal ribosomal protein uS8 family. As to quaternary structure, part of the 30S ribosomal subunit.

It localises to the plastid. Its subcellular location is the chloroplast. One of the primary rRNA binding proteins, it binds directly to 16S rRNA central domain where it helps coordinate assembly of the platform of the 30S subunit. This chain is Small ribosomal subunit protein uS8c (rps8), found in Chlamydomonas reinhardtii (Chlamydomonas smithii).